The chain runs to 132 residues: Small ribosomal subunit protein uS8 (132 aa).

The protein belongs to the universal ribosomal protein uS8 family. Part of the 30S ribosomal subunit. Contacts proteins S5 and S12.

One of the primary rRNA binding proteins, it binds directly to 16S rRNA central domain where it helps coordinate assembly of the platform of the 30S subunit. The sequence is that of Small ribosomal subunit protein uS8 from Rhodopseudomonas palustris (strain BisB18).